The primary structure comprises 356 residues: Tyrosine recombinase XerS (356 aa).

Residues 16–121 (IMPSYVLEYY…ALSSLYKYLT (106 aa)) enclose the Core-binding (CB) domain. The 186-residue stretch at 169-354 (GFLDYIDNEY…INEEQKNALD (186 aa)) folds into the Tyr recombinase domain. Catalysis depends on residues Arg210, Lys234, His306, Arg309, and His332. Tyr341 acts as the O-(3'-phospho-DNA)-tyrosine intermediate in catalysis.

The protein belongs to the 'phage' integrase family. XerS subfamily.

It is found in the cytoplasm. Its activity is regulated as follows. FtsK is required for recombination. Its function is as follows. Site-specific tyrosine recombinase, which acts by catalyzing the cutting and rejoining of the recombining DNA molecules. Essential to convert dimers of the bacterial chromosome into monomers to permit their segregation at cell division. This Lactococcus lactis subsp. lactis (strain IL1403) (Streptococcus lactis) protein is Tyrosine recombinase XerS.